Consider the following 621-residue polypeptide: UvrABC system protein C (621 aa).

The GIY-YIG domain maps to 13-92 (EKPGVYMMRN…IKENRPKYNV (80 aa)). Positions 205-240 (DELVRKIEEKMKAAAISMDFENAARYRDQIIALNNI) constitute a UVR domain.

This sequence belongs to the UvrC family. Interacts with UvrB in an incision complex.

It is found in the cytoplasm. In terms of biological role, the UvrABC repair system catalyzes the recognition and processing of DNA lesions. UvrC both incises the 5' and 3' sides of the lesion. The N-terminal half is responsible for the 3' incision and the C-terminal half is responsible for the 5' incision. This is UvrABC system protein C from Alkaliphilus oremlandii (strain OhILAs) (Clostridium oremlandii (strain OhILAs)).